The primary structure comprises 341 residues: Tetraacyldisaccharide 4'-kinase (341 aa).

54–61 serves as a coordination point for ATP; the sequence is TVGGAGKT.

It belongs to the LpxK family.

It catalyses the reaction a lipid A disaccharide + ATP = a lipid IVA + ADP + H(+). Its pathway is glycolipid biosynthesis; lipid IV(A) biosynthesis; lipid IV(A) from (3R)-3-hydroxytetradecanoyl-[acyl-carrier-protein] and UDP-N-acetyl-alpha-D-glucosamine: step 6/6. Transfers the gamma-phosphate of ATP to the 4'-position of a tetraacyldisaccharide 1-phosphate intermediate (termed DS-1-P) to form tetraacyldisaccharide 1,4'-bis-phosphate (lipid IVA). The polypeptide is Tetraacyldisaccharide 4'-kinase (Brucella melitensis biotype 1 (strain ATCC 23456 / CCUG 17765 / NCTC 10094 / 16M)).